The following is a 378-amino-acid chain: Anhydro-N-acetylmuramic acid kinase (378 aa).

9–16 (GTSADGID) provides a ligand contact to ATP.

This sequence belongs to the anhydro-N-acetylmuramic acid kinase family.

The catalysed reaction is 1,6-anhydro-N-acetyl-beta-muramate + ATP + H2O = N-acetyl-D-muramate 6-phosphate + ADP + H(+). Its pathway is amino-sugar metabolism; 1,6-anhydro-N-acetylmuramate degradation. It functions in the pathway cell wall biogenesis; peptidoglycan recycling. Catalyzes the specific phosphorylation of 1,6-anhydro-N-acetylmuramic acid (anhMurNAc) with the simultaneous cleavage of the 1,6-anhydro ring, generating MurNAc-6-P. Is required for the utilization of anhMurNAc either imported from the medium or derived from its own cell wall murein, and thus plays a role in cell wall recycling. The polypeptide is Anhydro-N-acetylmuramic acid kinase (Synechococcus sp. (strain ATCC 27144 / PCC 6301 / SAUG 1402/1) (Anacystis nidulans)).